A 500-amino-acid polypeptide reads, in one-letter code: Glutamate--tRNA ligase (500 aa).

The 'HIGH' region signature appears at 12-22; it reads PSPTGHLHIGN. A 'KMSKS' region motif is present at residues 259–263; it reads KLSKR. Lysine 262 serves as a coordination point for ATP.

This sequence belongs to the class-I aminoacyl-tRNA synthetase family. Glutamate--tRNA ligase type 1 subfamily. Monomer.

Its subcellular location is the cytoplasm. It carries out the reaction tRNA(Glu) + L-glutamate + ATP = L-glutamyl-tRNA(Glu) + AMP + diphosphate. Functionally, catalyzes the attachment of glutamate to tRNA(Glu) in a two-step reaction: glutamate is first activated by ATP to form Glu-AMP and then transferred to the acceptor end of tRNA(Glu). This chain is Glutamate--tRNA ligase, found in Lactobacillus delbrueckii subsp. bulgaricus (strain ATCC 11842 / DSM 20081 / BCRC 10696 / JCM 1002 / NBRC 13953 / NCIMB 11778 / NCTC 12712 / WDCM 00102 / Lb 14).